A 136-amino-acid polypeptide reads, in one-letter code: Gilles de la Tourette syndrome chromosomal region candidate gene 1 protein (136 aa).

Residues alanine 73–cysteine 93 form a helical membrane-spanning segment.

The protein localises to the membrane. The sequence is that of Gilles de la Tourette syndrome chromosomal region candidate gene 1 protein (GTSCR1) from Homo sapiens (Human).